A 160-amino-acid chain; its full sequence is Iron-sulfur assembly protein IscA1 (160 aa).

This sequence belongs to the HesB/IscA family. In terms of assembly, tetramer.

The protein localises to the mitochondrion. The protein operates within cofactor biosynthesis; iron-sulfur cluster biosynthesis. In terms of biological role, participates in iron-sulfur cluster formation (ISC) pathway for iron-sulfur (Fe-S) cluster biogenesis. Can bind iron and [4Fe-4S] clusters. May function as an iron chaperone. The protein is Iron-sulfur assembly protein IscA1 of Plasmodium falciparum (isolate 3D7).